The primary structure comprises 250 residues: MSFTVIIPARLASTRLPNKPLADLGGKPMIVRVAERAMQSGAAQVIVATDHADIFAACVQHKVAVQMTRADHPSGTDRIAEVAALIGLPDEAVVVNVQGDEPLIDPSLIAATATLISRDVPMATAAHAISEIEEVFNPNVVKVVLDKSGRALYFSRATIPWHRDGFAVSKDAIPAGYAPLRHIGLYAYRNAFLQEYPQLSVSPLEQLEALEQLRVLWHGVPIAVHVTPHAPVTGVDTPEDLQRVRQFFAQ.

It belongs to the KdsB family.

The protein localises to the cytoplasm. The enzyme catalyses 3-deoxy-alpha-D-manno-oct-2-ulosonate + CTP = CMP-3-deoxy-beta-D-manno-octulosonate + diphosphate. Its pathway is nucleotide-sugar biosynthesis; CMP-3-deoxy-D-manno-octulosonate biosynthesis; CMP-3-deoxy-D-manno-octulosonate from 3-deoxy-D-manno-octulosonate and CTP: step 1/1. It functions in the pathway bacterial outer membrane biogenesis; lipopolysaccharide biosynthesis. In terms of biological role, activates KDO (a required 8-carbon sugar) for incorporation into bacterial lipopolysaccharide in Gram-negative bacteria. This is 3-deoxy-manno-octulosonate cytidylyltransferase from Janthinobacterium sp. (strain Marseille) (Minibacterium massiliensis).